An 82-amino-acid polypeptide reads, in one-letter code: Small ribosomal subunit protein bS18 (82 aa).

Residues 1–21 (MKRNNSKKVRVEPTRRPKKNP) are disordered.

This sequence belongs to the bacterial ribosomal protein bS18 family. In terms of assembly, part of the 30S ribosomal subunit. Forms a tight heterodimer with protein bS6.

Its function is as follows. Binds as a heterodimer with protein bS6 to the central domain of the 16S rRNA, where it helps stabilize the platform of the 30S subunit. This is Small ribosomal subunit protein bS18 from Corynebacterium kroppenstedtii (strain DSM 44385 / JCM 11950 / CIP 105744 / CCUG 35717).